We begin with the raw amino-acid sequence, 318 residues long: Homoserine kinase (318 aa).

Position 97-107 (97-107 (PIGSGLGSSAC)) interacts with ATP.

The protein belongs to the GHMP kinase family. Homoserine kinase subfamily.

The protein resides in the cytoplasm. It catalyses the reaction L-homoserine + ATP = O-phospho-L-homoserine + ADP + H(+). The protein operates within amino-acid biosynthesis; L-threonine biosynthesis; L-threonine from L-aspartate: step 4/5. Functionally, catalyzes the ATP-dependent phosphorylation of L-homoserine to L-homoserine phosphate. This chain is Homoserine kinase, found in Vibrio cholerae serotype O1 (strain M66-2).